Reading from the N-terminus, the 51-residue chain is MGQKWKLYIVKDGKVIRKNKFCPRCGPGVFMADHGDRWACGRCGYTEWKKK.

Positions 22, 25, 40, and 43 each coordinate Zn(2+). Residues 22–43 (CPRCGPGVFMADHGDRWACGRC) form a C4-type zinc finger.

This sequence belongs to the eukaryotic ribosomal protein eS31 family. In terms of assembly, part of the 30S ribosomal subunit. It depends on Zn(2+) as a cofactor.

The sequence is that of Small ribosomal subunit protein eS31 from Pyrococcus abyssi (strain GE5 / Orsay).